We begin with the raw amino-acid sequence, 217 residues long: Putative thymidylate synthase (217 aa).

Cys-139 is a catalytic residue.

It belongs to the thymidylate synthase family. Archaeal-type ThyA subfamily. As to quaternary structure, monomer.

It is found in the cytoplasm. Its pathway is pyrimidine metabolism; dTTP biosynthesis. In terms of biological role, may catalyze the biosynthesis of dTMP using an unknown cosubstrate. The polypeptide is Putative thymidylate synthase (Methanosarcina mazei (strain ATCC BAA-159 / DSM 3647 / Goe1 / Go1 / JCM 11833 / OCM 88) (Methanosarcina frisia)).